The primary structure comprises 232 residues: Large ribosomal subunit protein uL1 (232 aa).

The protein belongs to the universal ribosomal protein uL1 family. Part of the 50S ribosomal subunit.

In terms of biological role, binds directly to 23S rRNA. The L1 stalk is quite mobile in the ribosome, and is involved in E site tRNA release. Functionally, protein L1 is also a translational repressor protein, it controls the translation of the L11 operon by binding to its mRNA. The polypeptide is Large ribosomal subunit protein uL1 (Sinorhizobium fredii (strain NBRC 101917 / NGR234)).